A 475-amino-acid chain; its full sequence is FAD-dependent monooxygenase sdgC (475 aa).

The signal sequence occupies residues 1–23 (MDKRSFKVIVVGGSIAGLTLAHS). The FAD site is built by E35, G49, and R126. N236 carries an N-linked (GlcNAc...) asparagine glycan. A330 serves as a coordination point for FAD. A helical transmembrane segment spans residues 446 to 466 (ISGVLLLVIPIIALVYGYSVI).

The protein belongs to the paxM FAD-dependent monooxygenase family. FAD is required as a cofactor.

The protein resides in the membrane. The protein operates within secondary metabolite biosynthesis. FAD-dependent monooxygenase; part of the gene cluster that mediates the biosynthesis of the polyenes aspernidgulenes. The carbon backbone of aspernidgulenes is synthesized by the HR-PKS sdgA, which accepts acetyl-CoA as the starter unit and performs malonyl-CoA extensions as well as regioselective methylation and reduction. The resulting nonaketide offloads the HR-PKS by intramolecular lactonization to yield the 5,6-dihydro-alpha-pyrone-containing hexaenoic acids preaspernidgulene A1 and A2. The FAD-dependent monooxygenase sdgC then installs the first epoxide on the penultimate double bond. Subsequently, the FAD-dependent monooxygenase sdgF presumably generates a ketone intermediate through Meinwald rearrangement involving a hydride shift. Next, sdgC introduces another epoxide on the last olefin of the ketone intermediate after E/Z isomerization. The epoxide hydrolase sdgD then catalyzes stereospecific cyclization of the 5,6-dihydro-alpha-pyrone and opening of the epoxide ring to form an oxygenated trimethylcyclopentanone and an oxabicyclo[2.2.1]heptane unit. Finally, the bicyclic unit undergoes hydrolytic cleavage, either spontaneously or catalyzed by sdgD, to assemble the dimethyl-gamma-lactone moiety in aspernidgulene A1. The protein is FAD-dependent monooxygenase sdgC of Emericella nidulans (strain FGSC A4 / ATCC 38163 / CBS 112.46 / NRRL 194 / M139) (Aspergillus nidulans).